A 417-amino-acid chain; its full sequence is Xylulose 5-phosphate/phosphate translocator, chloroplastic (417 aa).

Residues 1–82 constitute a chloroplast transit peptide; sequence MISLNLSPSL…GFSRKPRSIA (82 aa). The interval 66–102 is disordered; the sequence is TNPESSSGFSRKPRSIAAVGSSDSNPDEKSDLGEAEK. At Ala83 the chain carries N-acetylalanine. Residues 91-102 are compositionally biased toward basic and acidic residues; sequence PDEKSDLGEAEK. Helical transmembrane passes span 109–129, 141–161, 173–193, 198–218, 225–245, 247–267, 287–307, 318–338, and 384–404; these read TLQL…FNIF, WLLA…LWSF, FIIA…SACV, VAVS…VIFS, YPLA…LAAV, EVSF…GFVL, LYGC…IFVE, AIAS…SGVF, and LNAL…QATA. One can recognise an EamA domain in the interval 127-243; it reads NIFNKKALNV…LPIVMGCSLA (117 aa).

It belongs to the TPT transporter family. TPT (TC 2.A.7.9) subfamily. Widely expressed.

The protein localises to the plastid. The protein resides in the chloroplast membrane. Its function is as follows. Sugar phosphate/phosphate translocator that transports inorganic phosphate, triose phosphate, 3-phosphoglycerate, xylulose 5-phosphate (Xul-5-P) and to a lesser extent ribulose 5-phosphate. Does not transport ribose 5-phosphate or hexose phosphates. Provides cytosolic Xul-5-P to the chloroplast, where it is used as an intermediate in the plastidic pentose phosphate pathways. This is Xylulose 5-phosphate/phosphate translocator, chloroplastic (XPT) from Arabidopsis thaliana (Mouse-ear cress).